The primary structure comprises 123 residues: Ribosome-binding factor A (123 aa).

Belongs to the RbfA family. As to quaternary structure, monomer. Binds 30S ribosomal subunits, but not 50S ribosomal subunits or 70S ribosomes.

It is found in the cytoplasm. Functionally, one of several proteins that assist in the late maturation steps of the functional core of the 30S ribosomal subunit. Associates with free 30S ribosomal subunits (but not with 30S subunits that are part of 70S ribosomes or polysomes). Required for efficient processing of 16S rRNA. May interact with the 5'-terminal helix region of 16S rRNA. This chain is Ribosome-binding factor A, found in Koribacter versatilis (strain Ellin345).